The following is a 339-amino-acid chain: tRNA pseudouridine synthase B (339 aa).

Aspartate 40 serves as the catalytic Nucleophile. The RPE1 insert domain occupies 262 to 307; sequence FRRLSKFAYREEFEENTERSTAAYTLVREDANTGLTYKLPLEVELS.

It belongs to the pseudouridine synthase TruB family. Type 1 subfamily.

It catalyses the reaction uridine(55) in tRNA = pseudouridine(55) in tRNA. Its function is as follows. Responsible for synthesis of pseudouridine from uracil-55 in the psi GC loop of transfer RNAs. This is tRNA pseudouridine synthase B from Rickettsia felis (strain ATCC VR-1525 / URRWXCal2) (Rickettsia azadi).